A 118-amino-acid chain; its full sequence is Non-specific lipid-transfer protein 1 (118 aa).

Residues 1 to 25 (MASLRVSCLVALMCMVVISAPMAEA) form the signal peptide. 4 cysteine pairs are disulfide-bonded: cysteine 29/cysteine 76, cysteine 39/cysteine 53, cysteine 54/cysteine 99, and cysteine 74/cysteine 113.

It belongs to the plant LTP family.

Functionally, plant non-specific lipid-transfer proteins transfer phospholipids as well as galactolipids across membranes. May play a role in wax or cutin deposition in the cell walls of expanding epidermal cells and certain secretory tissues. The protein is Non-specific lipid-transfer protein 1 of Lens culinaris (Lentil).